Consider the following 832-residue polypeptide: Putative pentatricopeptide repeat-containing protein At5g08310, mitochondrial (832 aa).

The N-terminal 27 residues, 1-27, are a transit peptide targeting the mitochondrion; it reads MAFSRIALLCQRFSRQQQQRQLLHRPL. 19 PPR repeats span residues 105 to 139, 140 to 174, 176 to 212, 213 to 247, 252 to 281, 282 to 316, 317 to 351, 352 to 383, 385 to 415, 438 to 472, 473 to 507, 508 to 542, 543 to 577, 578 to 612, 613 to 647, 648 to 682, 683 to 717, 718 to 752, and 753 to 787; these read DMYAYNAMASILSRARQNASLKALVVDVLNSRCFM, SPGAFGFFIRCLGNAGLVDEASSVFDRVREMGLCV, NAYTYNCLLEAISKSNSSSVELVEARLKEMRDCGFHF, DKFTLTPVLQVYCNTGKSERALSVFNEILSRGWLD, TILVVSFCKWGQVDKAFELIEMLEERDIRL, NYKTYCVLIHGFVKESRIDKAFQLFEKMRRMGMNA, DIALYDVLIGGLCKHKDLEMALSLYLEIKRSGIPP, DRGILGKLLCSFSEESELSRITEVIIGDIDKK, VMLLYKSLFEGFIRNDLVHEAYSFIQNLMGN, DSDSLSIVINCLVKANKVDMAVTLLHDIVQNGLIP, GPMMYNNIIEGMCKEGRSEESLKLLGEMKDAGVEP, SQFTLNCIYGCLAERCDFVGALDLLKKMRFYGFEP, WIKHTTFLVKKLCENGRAVDACKYLDDVAGEGFLG, HMVASTAAIDGLIKNEGVDRGLELFRDICANGHCP, DVIAYHVLIKALCKACRTMEADILFNEMVSKGLKP, TVATYNSMIDGWCKEGEIDRGLSCIVRMYEDEKNP, DVITYTSLIHGLCASGRPSEAIFRWNEMKGKDCYP, NRITFMALIQGLCKCGWSGEALVYFREMEEKEMEP, and DSAVYLSLVSSFLSSENINAGFGIFREMVHKGRFP.

It belongs to the PPR family. P subfamily.

It is found in the mitochondrion. This chain is Putative pentatricopeptide repeat-containing protein At5g08310, mitochondrial, found in Arabidopsis thaliana (Mouse-ear cress).